The primary structure comprises 189 residues: Cell division protein SepF (189 aa).

The segment at E25–E70 is disordered. Composition is skewed to polar residues over residues R27 to A41 and L54 to E70.

The protein belongs to the SepF family. In terms of assembly, homodimer. Interacts with FtsZ.

The protein resides in the cytoplasm. In terms of biological role, cell division protein that is part of the divisome complex and is recruited early to the Z-ring. Probably stimulates Z-ring formation, perhaps through the cross-linking of FtsZ protofilaments. Its function overlaps with FtsA. The polypeptide is Cell division protein SepF (Streptococcus gordonii (strain Challis / ATCC 35105 / BCRC 15272 / CH1 / DL1 / V288)).